Reading from the N-terminus, the 314-residue chain is Protein phosphatase PTC7 homolog fig (314 aa).

Residues 43–309 enclose the PPM-type phosphatase domain; sequence PYLVTVVQGR…DDITLILSSV (267 aa). Positions 87, 88, and 232 each coordinate Mn(2+).

It belongs to the PP2C family. Mg(2+) is required as a cofactor. It depends on Mn(2+) as a cofactor.

It catalyses the reaction O-phospho-L-seryl-[protein] + H2O = L-seryl-[protein] + phosphate. The catalysed reaction is O-phospho-L-threonyl-[protein] + H2O = L-threonyl-[protein] + phosphate. The protein is Protein phosphatase PTC7 homolog fig of Drosophila simulans (Fruit fly).